Consider the following 434-residue polypeptide: Enolase (434 aa).

Gln-167 is a binding site for (2R)-2-phosphoglycerate. The active-site Proton donor is the Glu-209. Residues Asp-246, Glu-291, and Asp-318 each contribute to the Mg(2+) site. 4 residues coordinate (2R)-2-phosphoglycerate: Lys-343, Arg-372, Ser-373, and Lys-394. The active-site Proton acceptor is the Lys-343.

Belongs to the enolase family. As to quaternary structure, component of the RNA degradosome, a multiprotein complex involved in RNA processing and mRNA degradation. It depends on Mg(2+) as a cofactor.

Its subcellular location is the cytoplasm. It is found in the secreted. It localises to the cell surface. It catalyses the reaction (2R)-2-phosphoglycerate = phosphoenolpyruvate + H2O. The protein operates within carbohydrate degradation; glycolysis; pyruvate from D-glyceraldehyde 3-phosphate: step 4/5. In terms of biological role, catalyzes the reversible conversion of 2-phosphoglycerate (2-PG) into phosphoenolpyruvate (PEP). It is essential for the degradation of carbohydrates via glycolysis. This is Enolase from Buchnera aphidicola subsp. Acyrthosiphon pisum (strain 5A).